We begin with the raw amino-acid sequence, 257 residues long: Pimeloyl-[acyl-carrier protein] methyl ester esterase (257 aa).

In terms of domain architecture, AB hydrolase-1 spans 16–240; it reads LVLIHGWGMN…EQASHAPFIS (225 aa). Substrate contacts are provided by residues W22, 82–83, and 143–147; these read SL and FMALQ. Residue S82 is the Nucleophile of the active site. Active-site residues include D207 and H235. H235 lines the substrate pocket.

This sequence belongs to the AB hydrolase superfamily. Carboxylesterase BioH family. In terms of assembly, monomer.

It is found in the cytoplasm. It catalyses the reaction 6-carboxyhexanoyl-[ACP] methyl ester + H2O = 6-carboxyhexanoyl-[ACP] + methanol + H(+). It functions in the pathway cofactor biosynthesis; biotin biosynthesis. Functionally, the physiological role of BioH is to remove the methyl group introduced by BioC when the pimeloyl moiety is complete. It allows to synthesize pimeloyl-ACP via the fatty acid synthetic pathway through the hydrolysis of the ester bonds of pimeloyl-ACP esters. In Aliivibrio fischeri (strain ATCC 700601 / ES114) (Vibrio fischeri), this protein is Pimeloyl-[acyl-carrier protein] methyl ester esterase.